Here is a 146-residue protein sequence, read N- to C-terminus: Probable calcium-binding protein CML32 (146 aa).

4 consecutive EF-hand domains span residues 1-33, 34-69, 73-108, and 109-144; these read MSVAEIFERVDKNKDGKISWDEFAEAIRAFSPS, ITSEEIDNMFREIDVDGDNQIDVAEYASCLMLGGEG, DEDIVMKEAFDLYDIDGDGKISASEIHVVLKRLGEK, and QTIAECIAMVRAVDADGDGFVSFEEFKTMMSCNNKK. Ca(2+) contacts are provided by aspartate 11, asparagine 13, aspartate 15, lysine 17, glutamate 22, aspartate 47, aspartate 49, aspartate 51, glutamine 53, glutamate 58, aspartate 86, aspartate 88, aspartate 90, lysine 92, glutamate 97, aspartate 122, aspartate 124, aspartate 126, and glutamate 133.

Potential calcium sensor. The sequence is that of Probable calcium-binding protein CML32 (CML32) from Arabidopsis thaliana (Mouse-ear cress).